Consider the following 354-residue polypeptide: Histidinol-phosphate aminotransferase (354 aa).

Position 210 is an N6-(pyridoxal phosphate)lysine (Lys210).

It belongs to the class-II pyridoxal-phosphate-dependent aminotransferase family. Histidinol-phosphate aminotransferase subfamily. Homodimer. The cofactor is pyridoxal 5'-phosphate.

It carries out the reaction L-histidinol phosphate + 2-oxoglutarate = 3-(imidazol-4-yl)-2-oxopropyl phosphate + L-glutamate. It functions in the pathway amino-acid biosynthesis; L-histidine biosynthesis; L-histidine from 5-phospho-alpha-D-ribose 1-diphosphate: step 7/9. This is Histidinol-phosphate aminotransferase from Clostridium botulinum (strain 657 / Type Ba4).